The sequence spans 372 residues: Flagellar P-ring protein (372 aa).

An N-terminal signal peptide occupies residues 1–29 (MPARPIPVPAFALALALAAALAVPAPAAA).

It belongs to the FlgI family. The basal body constitutes a major portion of the flagellar organelle and consists of four rings (L,P,S, and M) mounted on a central rod.

The protein localises to the periplasm. It localises to the bacterial flagellum basal body. Assembles around the rod to form the L-ring and probably protects the motor/basal body from shearing forces during rotation. This is Flagellar P-ring protein from Anaeromyxobacter dehalogenans (strain 2CP-1 / ATCC BAA-258).